A 316-amino-acid chain; its full sequence is Neuroguidin (316 aa).

Disordered regions lie at residues 143–172 (SEAD…VKKY) and 280–316 (SALT…RKRH). Positions 145-157 (ADEGESDSGEDCA) are enriched in acidic residues. Basic residues predominate over residues 297 to 316 (KKSRKGPKKSKKRKGFRKRH).

The protein belongs to the SAS10 family. As to quaternary structure, part of the small subunit (SSU) processome, composed of more than 70 proteins and the RNA chaperone small nucleolar RNA (snoRNA) U3.

The protein resides in the nucleus. Its subcellular location is the nucleolus. It is found in the chromosome. The protein localises to the centromere. It localises to the cytoplasm. The protein resides in the cell projection. Its subcellular location is the axon. It is found in the dendrite. The protein localises to the filopodium. Functionally, part of the small subunit (SSU) processome, first precursor of the small eukaryotic ribosomal subunit. During the assembly of the SSU processome in the nucleolus, many ribosome biogenesis factors, an RNA chaperone and ribosomal proteins associate with the nascent pre-rRNA and work in concert to generate RNA folding, modifications, rearrangements and cleavage as well as targeted degradation of pre-ribosomal RNA by the RNA exosome. Its dissociation from the complex determines the transition from state pre-A1 to state pre-A1*. May inhibit mRNA translation. The polypeptide is Neuroguidin (ngdn) (Xenopus tropicalis (Western clawed frog)).